Here is a 100-residue protein sequence, read N- to C-terminus: Small ribosomal subunit protein uS14c (100 aa).

The protein belongs to the universal ribosomal protein uS14 family. Part of the 30S ribosomal subunit.

The protein resides in the plastid. It is found in the chloroplast. Functionally, binds 16S rRNA, required for the assembly of 30S particles. The sequence is that of Small ribosomal subunit protein uS14c from Pelargonium hortorum (Common geranium).